A 362-amino-acid polypeptide reads, in one-letter code: Sphingolipid delta(4)-desaturase (362 aa).

Over residues 1-10 the composition is skewed to low complexity; the sequence is MAESTATTTA. The disordered stretch occupies residues 1 to 20; the sequence is MAESTATTTAVPPPAEESWN. The next 3 helical transmembrane spans lie at 60–80, 90–110, and 121–143; these read PLTK…AYLL, FFLT…LAIH, and TLYN…AASF. Positions 110–114 match the Histidine box-1 motif; sequence HELSH. The Histidine box-2 signature appears at 147–151; that stretch reads HMEHH. Helical transmembrane passes span 169–189, 200–220, and 228–248; these read LILF…LLFY, PFTL…YLVV, and LAYF…AGHF. The Histidine box-3 signature appears at 290-294; that stretch reads HIEHH.

The protein belongs to the fatty acid desaturase type 1 family. DEGS subfamily.

It is found in the membrane. It carries out the reaction an N-acylsphinganine + 2 Fe(II)-[cytochrome b5] + O2 + 2 H(+) = an N-acylsphing-4-enine + 2 Fe(III)-[cytochrome b5] + 2 H2O. It functions in the pathway lipid metabolism; sphingolipid metabolism. Delta(4)-fatty-acid desaturase which introduces a double bond at the 4-position in the long-chain base (LCB) of ceramides. Required for sphingosine biosynthesis. The chain is Sphingolipid delta(4)-desaturase (dsd1) from Schizosaccharomyces pombe (strain 972 / ATCC 24843) (Fission yeast).